The primary structure comprises 501 residues: Actin nucleation-promoting factor WASL (501 aa).

An N-acetylserine modification is found at serine 2. The WH1 domain maps to 31–138 (LGKKCVTMSS…KAVTDLLGRR (108 aa)). Disordered regions lie at residues 135 to 158 (LGRR…PMAT) and 180 to 202 (SHTK…DIGT). Residues 183-195 (KEKKKGKAKKKRL) are compositionally biased toward basic residues. A CRIB domain is found at 200–213 (IGTPSNFQHIGHVG). Serine 239 carries the post-translational modification Phosphoserine; by TNK2. Tyrosine 253 carries the post-translational modification Phosphotyrosine; by FAK1 and TNK2. Disordered regions lie at residues 263 to 405 (EAVK…KAAL) and 442 to 501 (QLKS…EWED). Composition is skewed to pro residues over residues 273–361 (APPP…PPPL) and 368–387 (APPP…PPGL). Arginine 304 is modified (omega-N-methylarginine). 2 consecutive WH2 domains span residues 401–418 (NKAA…LKKV) and 429–446 (GRDA…LKSV). A compositionally biased stretch (polar residues) spans 442–453 (QLKSVSDGQEST). A phosphoserine mark is found at serine 480 and serine 481. Over residues 482-501 (DEDEDDDDEEDFQDDDEWED) the composition is skewed to acidic residues.

As to quaternary structure, binds actin and the Arp2/3 complex. Interacts with CDC42. Interacts with FCHSD1. Interacts with FCHSD2. Binds to SH3 domains of GRB2. Interacts with the C-terminal SH3 domain of DNMBP. Interacts with SNX9. Interacts with the WW domains of PRPF40A/FBP11. Interacts with PTK2/FAK1. Interacts with PACSIN1, PACSIN2 and PACSIN3. Interacts with NOSTRIN. Binds to TNK2. Interacts with SNX33. Interacts with NONO (via second RRM domain); the interaction is direct. Component of a multiprotein complex with NONO and SFPQ; associates with the complex via direct interaction with NONO. Post-translationally, phosphorylation at Ser-239, Tyr-253, Ser-480 and Ser-481 enhances actin polymerization activity.

It is found in the cytoplasm. The protein resides in the cytoskeleton. Its subcellular location is the nucleus. Regulates actin polymerization by stimulating the actin-nucleating activity of the Arp2/3 complex. Involved in various processes, such as mitosis and cytokinesis, via its role in the regulation of actin polymerization. Together with CDC42, involved in the extension and maintenance of the formation of thin, actin-rich surface projections called filopodia. In addition to its role in the cytoplasm, also plays a role in the nucleus by regulating gene transcription, probably by promoting nuclear actin polymerization. Binds to HSF1/HSTF1 and forms a complex on heat shock promoter elements (HSE) that negatively regulates HSP90 expression. Plays a role in dendrite spine morphogenesis. The sequence is that of Actin nucleation-promoting factor WASL (Wasl) from Rattus norvegicus (Rat).